The following is a 359-amino-acid chain: Heme A synthase (359 aa).

Transmembrane regions (helical) follow at residues 23–43 (AVAF…VLGG), 85–105 (YAAL…FFEW), 109–129 (LLGR…WLRG), 137–157 (LKLL…WWMV), 172–192 (LAIH…LAAS), and 212–232 (AGLI…VAGL). Position 276 (His276) interacts with heme. The next 3 membrane-spanning stretches (helical) occupy residues 278–298 (MVAY…SGTL), 308–328 (IALL…LVLV), and 329–349 (VPLW…GMAV). His337 lines the heme pocket.

This sequence belongs to the COX15/CtaA family. Type 2 subfamily. As to quaternary structure, interacts with CtaB. Heme b is required as a cofactor.

The protein localises to the cell membrane. It catalyses the reaction Fe(II)-heme o + 2 A + H2O = Fe(II)-heme a + 2 AH2. It participates in porphyrin-containing compound metabolism; heme A biosynthesis; heme A from heme O: step 1/1. In terms of biological role, catalyzes the conversion of heme O to heme A by two successive hydroxylations of the methyl group at C8. The first hydroxylation forms heme I, the second hydroxylation results in an unstable dihydroxymethyl group, which spontaneously dehydrates, resulting in the formyl group of heme A. The chain is Heme A synthase from Beijerinckia indica subsp. indica (strain ATCC 9039 / DSM 1715 / NCIMB 8712).